The primary structure comprises 109 residues: Nucleoid-associated protein YbaB (109 aa).

Belongs to the YbaB/EbfC family. In terms of assembly, homodimer.

The protein localises to the cytoplasm. It is found in the nucleoid. Functionally, binds to DNA and alters its conformation. May be involved in regulation of gene expression, nucleoid organization and DNA protection. This is Nucleoid-associated protein YbaB from Escherichia coli O127:H6 (strain E2348/69 / EPEC).